The chain runs to 235 residues: RAD9, HUS1, RAD1-interacting nuclear orphan protein 1 (235 aa).

Ser-50 bears the Phosphoserine mark. The short motif at 54–60 is the RAD1-binding motif element; that stretch reads SWVSPQF. Disordered stretches follow at residues 75–106, 111–130, and 149–198; these read HRDQ…SETL, RVQP…VPLF, and VFAP…LVKD. The segment covering 96–106 has biased composition (polar residues); the sequence is ESPQSSSSETL. A D-box motif is present at residues 123 to 130; sequence RRPLVPLF. Residues 161 to 173 are compositionally biased toward basic and acidic residues; sequence SVRDDPISPDQKE. Positions 171 to 175 match the KEN box motif; that stretch reads QKENS.

In terms of assembly, interacts (when phosphorylated by PLK1) with POLQ; promoting POLQ recruitment to DNA damage sites. Interacts with RAD1; interaction is direct and promotes association with the 9-1-1 (RAD9-RAD1-HUS1) complex. Interacts with RAD18. Interacts with TOPBP1. Interacts with UBE2N. In terms of processing, phosphorylated at Ser-50 by PLK1, promoting interaction with polymerase theta (POLQ). Ubiquitinated and degraded by the APC/C complex upon mitotic exit.

The protein resides in the nucleus. It is found in the chromosome. Involved in microhomology-mediated end-joining (MMEJ) DNA repair by promoting recruitment of polymerase theta (POLQ) to DNA damage sites during mitosis. MMEJ is an alternative non-homologous end-joining (NHEJ) machinery that takes place during mitosis to repair double-strand breaks in DNA that originate in S-phase. Accumulates in M-phase; following phosphorylation by PLK1, interacts with POLQ, enabling its recruitment to double-strand breaks for subsequent repair. Also involved in the DNA damage response (DDR) signaling in response to genotoxic stresses such as ionizing radiation (IR) during the S phase. Recruited to sites of DNA damage through interaction with the 9-1-1 cell-cycle checkpoint response complex and TOPBP1 in a ATR-dependent manner. Required for the progression of the G1 to S phase transition. Plays a role in the stimulation of CHEK1 phosphorylation. The protein is RAD9, HUS1, RAD1-interacting nuclear orphan protein 1 (Rhno1) of Mus musculus (Mouse).